Here is a 117-residue protein sequence, read N- to C-terminus: Ribosome-binding factor A (117 aa).

It belongs to the RbfA family. In terms of assembly, monomer. Binds 30S ribosomal subunits, but not 50S ribosomal subunits or 70S ribosomes.

Its subcellular location is the cytoplasm. Its function is as follows. One of several proteins that assist in the late maturation steps of the functional core of the 30S ribosomal subunit. Associates with free 30S ribosomal subunits (but not with 30S subunits that are part of 70S ribosomes or polysomes). Required for efficient processing of 16S rRNA. May interact with the 5'-terminal helix region of 16S rRNA. This Bacillus licheniformis (strain ATCC 14580 / DSM 13 / JCM 2505 / CCUG 7422 / NBRC 12200 / NCIMB 9375 / NCTC 10341 / NRRL NRS-1264 / Gibson 46) protein is Ribosome-binding factor A.